The primary structure comprises 231 residues: Small ribosomal subunit protein uS3 (231 aa).

Positions 39 to 107 (IRELLHKELK…DVVLNIVEIR (69 aa)) constitute a KH type-2 domain.

The protein belongs to the universal ribosomal protein uS3 family. Part of the 30S ribosomal subunit. Forms a tight complex with proteins S10 and S14.

Binds the lower part of the 30S subunit head. Binds mRNA in the 70S ribosome, positioning it for translation. In Nitrobacter winogradskyi (strain ATCC 25391 / DSM 10237 / CIP 104748 / NCIMB 11846 / Nb-255), this protein is Small ribosomal subunit protein uS3.